Reading from the N-terminus, the 92-residue chain is MGRSLKKGPFCDEHLMKKIEKLNATGQKQVIKTWSRRSTIFPQFVGHTIAVYDGRKHVPVYITEDMVGHKLGEFAPTRTFRGHAGDDKKTKR.

Belongs to the universal ribosomal protein uS19 family.

Its function is as follows. Protein S19 forms a complex with S13 that binds strongly to the 16S ribosomal RNA. The sequence is that of Small ribosomal subunit protein uS19 from Geobacillus kaustophilus (strain HTA426).